Consider the following 126-residue polypeptide: Large ribosomal subunit protein bL12 (126 aa).

It belongs to the bacterial ribosomal protein bL12 family. As to quaternary structure, homodimer. Part of the ribosomal stalk of the 50S ribosomal subunit. Forms a multimeric L10(L12)X complex, where L10 forms an elongated spine to which 2 to 4 L12 dimers bind in a sequential fashion. Binds GTP-bound translation factors.

Functionally, forms part of the ribosomal stalk which helps the ribosome interact with GTP-bound translation factors. Is thus essential for accurate translation. The protein is Large ribosomal subunit protein bL12 of Nitrosococcus oceani (strain ATCC 19707 / BCRC 17464 / JCM 30415 / NCIMB 11848 / C-107).